Consider the following 341-residue polypeptide: MEREKEQFRKLFIGGLSFQTTEESLRNYYEQWGKLTDCVVMRDPASKRSRGFGFVTFSSMAEVDAAMAARPHSIDGRVVEPKRAVAREESGKPGAHVTVKKLFVGGIKEDTEEHHLRDYFAEYGKIDTIEIITDRQSGKKRGFGFVTFDDHDPVDKIVLQKYHTINGHNAEVRKALSRQEMQEVQSSRSGRGGNFGFGDSRGGGGNFGPGPGSNFRGGSDGYGSGRGFGDGYNGYGGGPGGGNFGGSPGYGGGRGGYGGGGPGYGNQGGGYGGGYDNYGGGNYGSGNYNDFGNYNQQPSNYGPMKSGNFGGSRNMGGPYGGGNYGPGGSGGSGGYGGRSRY.

RRM domains lie at 9-92 and 100-179; these read RKLF…ESGK and KKLF…LSRQ. K10 participates in a covalent cross-link: Glycyl lysine isopeptide (Lys-Gly) (interchain with G-Cter in SUMO2). S17 is subject to Phosphoserine. R26 carries the post-translational modification Omega-N-methylarginine. Position 73 is a phosphoserine (S73). K92 is modified (N6,N6-dimethyllysine; alternate). Residue K92 forms a Glycyl lysine isopeptide (Lys-Gly) (interchain with G-Cter in SUMO2); alternate linkage. Residues K100, K108, and K125 each participate in a glycyl lysine isopeptide (Lys-Gly) (interchain with G-Cter in SUMO2) cross-link. T128 carries the post-translational modification Phosphothreonine. The residue at position 137 (S137) is a Phosphoserine. K140 is covalently cross-linked (Glycyl lysine isopeptide (Lys-Gly) (interchain with G-Cter in SUMO2)). T147 is modified (phosphothreonine). Glycyl lysine isopeptide (Lys-Gly) (interchain with G-Cter in SUMO2); alternate cross-links involve residues K156 and K161. Residues K156 and K161 each carry the N6-acetyllysine; alternate modification. Phosphothreonine is present on T164. Residue K174 forms a Glycyl lysine isopeptide (Lys-Gly) (interchain with G-Cter in SUMO2) linkage. Phosphoserine is present on residues S177 and S189. The segment at 181–341 is disordered; sequence MQEVQSSRSG…SGGYGGRSRY (161 aa). The segment covering 190-211 has biased composition (gly residues); that stretch reads GRGGNFGFGDSRGGGGNFGPGP. Residue R191 is modified to Asymmetric dimethylarginine; alternate. Dimethylated arginine; alternate is present on R191. R191 is subject to Omega-N-methylarginine; alternate. Residue S200 is modified to Phosphoserine. R201 is modified (asymmetric dimethylarginine; alternate). R201 carries the dimethylated arginine; alternate modification. Position 201 is an omega-N-methylarginine; alternate (R201). The residue at position 213 (S213) is a Phosphoserine. R216 is modified (omega-N-methylarginine). Residues S219 and S224 each carry the phosphoserine modification. R226 bears the Omega-N-methylarginine mark. A Phosphoserine modification is found at S247. R254 bears the Asymmetric dimethylarginine; alternate mark. The residue at position 254 (R254) is an Omega-N-methylarginine; alternate. Residues 296-335 form a nuclear targeting sequence region; sequence QQPSNYGPMKSGNFGGSRNMGGPYGGGNYGPGGSGGSGGY. A compositionally biased stretch (gly residues) spans 308-341; that stretch reads NFGGSRNMGGPYGGGNYGPGGSGGSGGYGGRSRY. Position 312 is a phosphoserine (S312). R313 carries the post-translational modification Omega-N-methylarginine. Y319 carries the phosphotyrosine modification. Residues S329 and S332 each carry the phosphoserine modification. Y335 is modified (phosphotyrosine). An Omega-N-methylarginine modification is found at R338.

Identified in the spliceosome C complex. Identified in a IGF2BP1-dependent mRNP granule complex containing untranslated mRNAs. Interacts with IGF2BP1. Interacts with C9orf72. Interacts with DGCR8. Interacts with TARDBP. Interacts with CKAP5. Interacts with PPIA/CYPA. Interacts (via C-terminus) with FAM76B; the interaction results in retention of HNRNPA2B1 in the nucleus and inhibition of the NF-kappa-B-mediated inflammatory pathway. Interacts with NF-kappa-B inhibitors NFKBIA and NFKBIE; the interaction may be mediated by the RRM2 domain of HNRNPA2B1, and HNRNPA2B1 may interact simultaneously with FAM76B and either NFKBIA or NFKBIE to form a complex. Sumoylated in exosomes, promoting miRNAs-binding. Post-translationally, asymmetric dimethylation at Arg-254 constitutes the major methylation site. According to a report, methylation affects subcellular location and promotes nuclear localization. According to another report, methylation at Arg-254 does not influence nucleocytoplasmic shuttling.

The protein localises to the nucleus. The protein resides in the nucleoplasm. It localises to the cytoplasmic granule. Its subcellular location is the secreted. It is found in the extracellular exosome. Its function is as follows. Heterogeneous nuclear ribonucleoprotein (hnRNP) that associates with nascent pre-mRNAs, packaging them into hnRNP particles. The hnRNP particle arrangement on nascent hnRNA is non-random and sequence-dependent and serves to condense and stabilize the transcripts and minimize tangling and knotting. Packaging plays a role in various processes such as transcription, pre-mRNA processing, RNA nuclear export, subcellular location, mRNA translation and stability of mature mRNAs. Forms hnRNP particles with at least 20 other different hnRNP and heterogeneous nuclear RNA in the nucleus. Involved in transport of specific mRNAs to the cytoplasm in oligodendrocytes and neurons: acts by specifically recognizing and binding the A2RE (21 nucleotide hnRNP A2 response element) or the A2RE11 (derivative 11 nucleotide oligonucleotide) sequence motifs present on some mRNAs, and promotes their transport to the cytoplasm. Specifically binds single-stranded telomeric DNA sequences, protecting telomeric DNA repeat against endonuclease digestion. Also binds other RNA molecules, such as primary miRNA (pri-miRNAs): acts as a nuclear 'reader' of the N6-methyladenosine (m6A) mark by specifically recognizing and binding a subset of nuclear m6A-containing pri-miRNAs. Binding to m6A-containing pri-miRNAs promotes pri-miRNA processing by enhancing binding of DGCR8 to pri-miRNA transcripts. Involved in miRNA sorting into exosomes following sumoylation, possibly by binding (m6A)-containing pre-miRNAs. Acts as a regulator of efficiency of mRNA splicing, possibly by binding to m6A-containing pre-mRNAs. Plays a role in the splicing of pyruvate kinase PKM by binding repressively to sequences flanking PKM exon 9, inhibiting exon 9 inclusion and resulting in exon 10 inclusion and production of the PKM M2 isoform. This Saguinus oedipus (Cotton-top tamarin) protein is Heterogeneous nuclear ribonucleoproteins A2/B1 (HNRNPA2B1).